We begin with the raw amino-acid sequence, 2036 residues long: Bikaverin polyketide synthase bik1 (2036 aa).

Residues 8–242 (YVFGDQSTPV…YPAPIYGPYH (235 aa)) form an N-terminal acylcarrier protein transacylase domain (SAT) region. The region spanning 370-801 (ENKIAIIGFS…GGNTSLLLED (432 aa)) is the Ketosynthase family 3 (KS3) domain. Residues Cys541, His676, and His718 each act as for beta-ketoacyl synthase activity in the active site. The tract at residues 908-1209 (FLFTGQGAQE…LASLRRKEDH (302 aa)) is acyl/malonyl transferases. Catalysis depends on Ser997, which acts as the For acyl/malonyl transferase activity. Positions 1293 to 1425 (HNVIEQVHGD…CDVAVENPSS (133 aa)) are N-terminal hotdog fold. In terms of domain architecture, PKS/mFAS DH spans 1293 to 1600 (HNVIEQVHGD…FKKVARKVLE (308 aa)). Positions 1295–1599 (VIEQVHGDKR…TFKKVARKVL (305 aa)) are product template (PT) domain. The Proton acceptor; for dehydratase activity role is filled by His1325. The segment at 1452–1600 (SAHMMRRGLL…FKKVARKVLE (149 aa)) is C-terminal hotdog fold. Asp1511 (proton donor; for dehydratase activity) is an active-site residue. The tract at residues 1628–1654 (VLTPPSTTSHSVGTTSPPEPTESPVGS) is disordered. Positions 1638–1654 (SVGTTSPPEPTESPVGS) are enriched in low complexity. Positions 1653–1730 (GSASGLIQKA…DLKSFLGAND (78 aa)) constitute a Carrier domain. Ser1690 bears the O-(pantetheine 4'-phosphoryl)serine mark. The tract at residues 1733–1758 (FSSSNSEAESSASSAASTSPSDHGDD) is disordered. Over residues 1734–1753 (SSSNSEAESSASSAASTSPS) the composition is skewed to low complexity. Residue Ser1857 is the For thioesterase activity of the active site.

The protein operates within secondary metabolite biosynthesis. Its function is as follows. Polyketide synthase; part of the gene cluster that mediates the biosynthesis of bikaverin, a red pigment also considered as a mycotoxin. The first stage is catalyzed by the polyketide synthase bik1, which catalyzes the formation of the intermediate SMA76a also knowm as pre-bikaverin. FAD-dependent monooxygenase bik2 might then be responsible for the oxidation of pre-bikaverin to oxo-pre-bikaverin which is in turn methylated by the O-methyltransferase bik3 to me-oxo-pre-bikaverin. A further cycle of oxydation and methylation by bik2 and bik3 leads to the final product of bikaverin, via a nor-bikaverin intermediate. The polypeptide is Bikaverin polyketide synthase bik1 (Gibberella fujikuroi (strain CBS 195.34 / IMI 58289 / NRRL A-6831) (Bakanae and foot rot disease fungus)).